The chain runs to 93 residues: Small ribosomal subunit protein bS16 (93 aa).

It belongs to the bacterial ribosomal protein bS16 family.

The chain is Small ribosomal subunit protein bS16 from Opitutus terrae (strain DSM 11246 / JCM 15787 / PB90-1).